The following is a 188-amino-acid chain: MKHKVGILGGTFDPPHLAHLHMAEEAKAQLGLEKILFLPNKVPPHKQISGMASNEERVEMLQLMIEDRDSFEIDTRELMRTGKSYTYDTMRDMISEQPNTDFYFIIGGDMVEYLPKWYHIDDLVKMVTFVGVNRPLYQKEVPYDIVKINMPETAISSTEIRNDIEHAEAFLPEKVWSYIKEHQLYGKK.

This sequence belongs to the NadD family.

The catalysed reaction is nicotinate beta-D-ribonucleotide + ATP + H(+) = deamido-NAD(+) + diphosphate. Its pathway is cofactor biosynthesis; NAD(+) biosynthesis; deamido-NAD(+) from nicotinate D-ribonucleotide: step 1/1. Its function is as follows. Catalyzes the reversible adenylation of nicotinate mononucleotide (NaMN) to nicotinic acid adenine dinucleotide (NaAD). This is Probable nicotinate-nucleotide adenylyltransferase from Listeria innocua serovar 6a (strain ATCC BAA-680 / CLIP 11262).